Consider the following 674-residue polypeptide: MKLNALSTATHGSRSSPVKLWKFSTSFLLAASIIVSGQSWAAETAKPATDATKAANDALLKELPFDDKTSFDLAHKGFIAPLPAEPIKGEKGNMIWDPSKYGFIKEGEAAPDTTNPSLWRQSQLINISGLFEVTDGIYQVRNYDLSNMTIVEGKDGITIFDPLISQETAKAALDLYYKHRPKKPVVAVIYTHSHVDHYGGVRGVVDEADVKAGKVKIYAPLGFLEHAVAENVMAGTAMSRRASYMYGNLLPPDAKGQLGAGLGTTTSAGTVTLIPPTDIIKETGETHVIDGLTYEFMYAPGSEAPAEMLYYIKEKKALNAAEDSTHTLHNTYSLRGAKIRDPLAWSKYLNEALKLWGDDVQVMYAMHHWPVWGNKEVREQLSLQRDMYRYINDETLRLANKGYTMTEIAEQVKLPKKIATKFSNRGYYGSLNHNVKATYVLYLGWFIGNPATLWELPPADKAKRYVEMMGGADAVLKKAKEYYDKGDFRWVAEVVNHVVFAEPNNQAAKNMQADALEQLGYQAESGPWRNFYLTGAQELRNGVQQLPTPDTASPDTVKAMDLDLFFDFLAMRLKGPDVADKHITLNLDFTDLKQKYTLEMVNGVLNHTEGMQAKNADATVTLTRETLNNVMLKQTTLKDAESSGDIKIEGDKGKLEELMSYMDNFDFWFNIVTP.

The signal sequence occupies residues 1–41 (MKLNALSTATHGSRSSPVKLWKFSTSFLLAASIIVSGQSWA). 6 residues coordinate Zn(2+): H192, H194, D196, H197, E303, and E322. Residues 330 to 335 (NTYSLR) and R340 each bind sulfate. H367 is a binding site for Zn(2+). Y428 provides a ligand contact to sulfate.

The protein belongs to the metallo-beta-lactamase superfamily. Type III sulfatase family. In terms of assembly, homodimer. It depends on Zn(2+) as a cofactor.

It is found in the periplasm. It catalyses the reaction a primary linear alkyl sulfate ester + H2O = a primary alcohol + sulfate + H(+). Inhibited by EDTA. Slightly activated in the presence of Ca(2+). Functionally, alkylsulfatase that cleaves primary alkyl sulfates such as sodium octyl sulfate and the widely used detergent sodium dodecyl sulfate (SDS). The sequence is that of Linear primary-alkylsulfatase from Pseudomonas sp.